A 504-amino-acid chain; its full sequence is ATP synthase subunit alpha 1 (504 aa).

170-177 (GDRQIGKT) contributes to the ATP binding site.

The protein belongs to the ATPase alpha/beta chains family. As to quaternary structure, F-type ATPases have 2 components, CF(1) - the catalytic core - and CF(0) - the membrane proton channel. CF(1) has five subunits: alpha(3), beta(3), gamma(1), delta(1), epsilon(1). CF(0) has three main subunits: a(1), b(2) and c(9-12). The alpha and beta chains form an alternating ring which encloses part of the gamma chain. CF(1) is attached to CF(0) by a central stalk formed by the gamma and epsilon chains, while a peripheral stalk is formed by the delta and b chains.

Its subcellular location is the cell inner membrane. The catalysed reaction is ATP + H2O + 4 H(+)(in) = ADP + phosphate + 5 H(+)(out). In terms of biological role, produces ATP from ADP in the presence of a proton gradient across the membrane. The alpha chain is a regulatory subunit. This chain is ATP synthase subunit alpha 1, found in Syntrophus aciditrophicus (strain SB).